The chain runs to 98 residues: Large ribosomal subunit protein bL28 (98 aa).

As to quaternary structure, part of the 50S ribosomal subunit.

The chain is Large ribosomal subunit protein bL28 (rpmB) from Thermus thermophilus (strain ATCC 27634 / DSM 579 / HB8).